We begin with the raw amino-acid sequence, 204 residues long: Holliday junction branch migration complex subunit RuvA (204 aa).

Residues 1 to 64 form a domain I region; that stretch reads MIGHLTGRLV…EDAHLLFGFS (64 aa). The segment at 65–143 is domain II; it reads QKTDRTLFRE…GIQQEDFFIE (79 aa). The flexible linker stretch occupies residues 144–155; sequence SQHLKQPEHALN. Residues 156 to 204 are domain III; the sequence is EQDIPASEAISALIALGYKAAEAEKLVKKISKPALSSEQLIREALKAAL.

This sequence belongs to the RuvA family. Homotetramer. Forms an RuvA(8)-RuvB(12)-Holliday junction (HJ) complex. HJ DNA is sandwiched between 2 RuvA tetramers; dsDNA enters through RuvA and exits via RuvB. An RuvB hexamer assembles on each DNA strand where it exits the tetramer. Each RuvB hexamer is contacted by two RuvA subunits (via domain III) on 2 adjacent RuvB subunits; this complex drives branch migration. In the full resolvosome a probable DNA-RuvA(4)-RuvB(12)-RuvC(2) complex forms which resolves the HJ.

It localises to the cytoplasm. Its function is as follows. The RuvA-RuvB-RuvC complex processes Holliday junction (HJ) DNA during genetic recombination and DNA repair, while the RuvA-RuvB complex plays an important role in the rescue of blocked DNA replication forks via replication fork reversal (RFR). RuvA specifically binds to HJ cruciform DNA, conferring on it an open structure. The RuvB hexamer acts as an ATP-dependent pump, pulling dsDNA into and through the RuvAB complex. HJ branch migration allows RuvC to scan DNA until it finds its consensus sequence, where it cleaves and resolves the cruciform DNA. The protein is Holliday junction branch migration complex subunit RuvA of Pasteurella multocida (strain Pm70).